The following is a 354-amino-acid chain: (R,R)-butanediol dehydrogenase (354 aa).

An Enoyl reductase (ER) domain is found at 10-350 (GDIRIEDIPE…NNESAVKIIV (341 aa)). The Zn(2+) site is built by C37, H71, and E157.

The protein belongs to the zinc-containing alcohol dehydrogenase family. Zn(2+) serves as cofactor.

The enzyme catalyses (R,R)-butane-2,3-diol + NAD(+) = (R)-acetoin + NADH + H(+). It carries out the reaction (S)-acetoin + NAD(+) = diacetyl + NADH + H(+). NAD-dependent butanediol dehydrogenase which catalyzes the oxidation of (R,R)-butane-2,3-diol to (3R)-acetoin and of meso-butane-2,3-diol to (3S)-acetoin. Preferentially oxidizes (R,R)-butane-2,3-diol, with a catalytic efficiency approximately fourfold higher than with meso-butane-2,3-diol. Shows a very low activity with (S,S)-butane-2,3-diol. Can also catalyze the reduction of (3R/3S)-acetoin and diacetyl in the presence of NADH. The protein is (R,R)-butanediol dehydrogenase of Neisseria gonorrhoeae (strain ATCC 700825 / FA 1090).